The chain runs to 513 residues: ATP synthase subunit alpha 2 (513 aa).

ATP is bound at residue 169–176 (GDRQTGKT).

It belongs to the ATPase alpha/beta chains family. As to quaternary structure, F-type ATPases have 2 components, CF(1) - the catalytic core - and CF(0) - the membrane proton channel. CF(1) has five subunits: alpha(3), beta(3), gamma(1), delta(1), epsilon(1). CF(0) has three main subunits: a(1), b(2) and c(9-12). The alpha and beta chains form an alternating ring which encloses part of the gamma chain. CF(1) is attached to CF(0) by a central stalk formed by the gamma and epsilon chains, while a peripheral stalk is formed by the delta and b chains.

The protein resides in the cell inner membrane. It catalyses the reaction ATP + H2O + 4 H(+)(in) = ADP + phosphate + 5 H(+)(out). In terms of biological role, produces ATP from ADP in the presence of a proton gradient across the membrane. The alpha chain is a regulatory subunit. The polypeptide is ATP synthase subunit alpha 2 (Shewanella frigidimarina (strain NCIMB 400)).